Consider the following 793-residue polypeptide: Ferredoxin/F(420)H(2)-dependent CoB-CoM heterodisulfide reductase subunit A (793 aa).

Residue 147–170 coordinates FAD; it reads GGGVAGIEAALNLAEAGFPVTMVE. 4Fe-4S ferredoxin-type domains follow at residues 233–264, 282–311, 571–600, and 601–629; these read RKPR…PMNY, QVVL…YEQK, MGAH…IENK, and KAVV…MRNF. Residues Cys-243, Cys-246, Cys-250, Cys-254, Cys-291, Cys-294, Cys-297, Cys-301, Cys-580, Cys-583, Cys-586, Cys-590, Cys-609, Cys-612, Cys-615, and Cys-619 each contribute to the [4Fe-4S] cluster site.

This sequence belongs to the HdrA family. As to quaternary structure, the ferredoxin/F(420)H(2)-dependent CoB-CoM heterodisulfide reductase is composed of three subunits; HdrA2, HdrB2 and HdrC2. Requires [4Fe-4S] cluster as cofactor. It depends on [2Fe-2S] cluster as a cofactor. The cofactor is FAD.

It is found in the cytoplasm. The catalysed reaction is coenzyme B + coenzyme M + 2 oxidized [2Fe-2S]-[ferredoxin] = coenzyme M-coenzyme B heterodisulfide + 2 reduced [2Fe-2S]-[ferredoxin] + 2 H(+). It carries out the reaction coenzyme B + 2 oxidized coenzyme F420-(gamma-L-Glu)(n) + coenzyme M + 2 reduced [2Fe-2S]-[ferredoxin] + 4 H(+) = coenzyme M-coenzyme B heterodisulfide + 2 reduced coenzyme F420-(gamma-L-Glu)(n) + 2 oxidized [2Fe-2S]-[ferredoxin]. The protein operates within cofactor metabolism; coenzyme M-coenzyme B heterodisulfide reduction; coenzyme B and coenzyme M from coenzyme M-coenzyme B heterodisulfide: step 1/1. Part of a complex that catalyzes the reversible reduction of CoM-S-S-CoB to the thiol-coenzymes H-S-CoM (coenzyme M) and H-S-CoB (coenzyme B). Catalyzes the transfer of electrons from ferredoxin to CoM-S-S-CoB during methanogenesis from acetate. Electrons transfer from ferredoxin to CoM-S-S-CoB via HdrA2, HdrC2 and HdrB2. In addition, the complex can use electron bifurcation to direct electron pairs from reduced coenzyme F420 towards the reduction of both ferredoxin and CoB-CoM heterodisulfide. This activity may take place during Fe(III)-dependent anaerobic methane oxidation. The sequence is that of Ferredoxin/F(420)H(2)-dependent CoB-CoM heterodisulfide reductase subunit A from Methanosarcina acetivorans (strain ATCC 35395 / DSM 2834 / JCM 12185 / C2A).